We begin with the raw amino-acid sequence, 289 residues long: Syntaxin-3 (289 aa).

The Cytoplasmic segment spans residues 1 to 263 (MKDRLEQLKA…MKYQGQARKK (263 aa)). Residues 32–111 (MDEFFSEIEE…IEEDEVRSSA (80 aa)) adopt a coiled-coil conformation. One can recognise a t-SNARE coiled-coil homology domain in the interval 191–253 (LSEIEGRHKD…EKARDETKRA (63 aa)). Residues 264–284 (LIIIIVIVVVLLGILALIIGL) traverse the membrane as a helical; Anchor for type IV membrane protein segment. Over 285 to 289 (SVGLK) the chain is Extracellular.

It belongs to the syntaxin family. In terms of assembly, interacts with REEP6. Interacts with PRPH2 in rod and cone photoreceptors. Interacts with ROM1. Interacts with SNAP25. Interacts with VAMP2. In terms of tissue distribution, heart, spleen, lung and kidney.

It is found in the membrane. In terms of biological role, potentially involved in docking of synaptic vesicles at presynaptic active zones. Apical receptor involved in membrane fusion of apical vesicles. Essential for survival of retinal photoreceetors. The sequence is that of Syntaxin-3 (Stx3) from Rattus norvegicus (Rat).